The primary structure comprises 396 residues: NADH-quinone oxidoreductase subunit D 1 (396 aa).

The protein belongs to the complex I 49 kDa subunit family. In terms of assembly, NDH-1 is composed of 14 different subunits. Subunits NuoB, C, D, E, F, and G constitute the peripheral sector of the complex.

The protein localises to the cell inner membrane. The enzyme catalyses a quinone + NADH + 5 H(+)(in) = a quinol + NAD(+) + 4 H(+)(out). In terms of biological role, NDH-1 shuttles electrons from NADH, via FMN and iron-sulfur (Fe-S) centers, to quinones in the respiratory chain. The immediate electron acceptor for the enzyme in this species is believed to be ubiquinone. Couples the redox reaction to proton translocation (for every two electrons transferred, four hydrogen ions are translocated across the cytoplasmic membrane), and thus conserves the redox energy in a proton gradient. The protein is NADH-quinone oxidoreductase subunit D 1 of Rhizobium etli (strain CIAT 652).